Consider the following 117-residue polypeptide: Conotoxin vil14.2 (117 aa).

Residues M1–F22 form the signal peptide. The propeptide occupies E23–R90. A disordered region spans residues R53–R77. Residues R62 to R77 are compositionally biased toward basic and acidic residues. 2 disulfide bridges follow: C96–C116 and C100–C112.

This sequence belongs to the conotoxin R superfamily. In terms of tissue distribution, expressed by the venom duct.

The protein resides in the secreted. This chain is Conotoxin vil14.2, found in Conus villepinii (Villepin's cone).